A 306-amino-acid polypeptide reads, in one-letter code: Putative S-adenosyl-L-methionine-dependent methyltransferase MAV_4442 (306 aa).

Residues Asp-129 and 158 to 159 (DL) contribute to the S-adenosyl-L-methionine site.

It belongs to the UPF0677 family.

Functionally, exhibits S-adenosyl-L-methionine-dependent methyltransferase activity. This is Putative S-adenosyl-L-methionine-dependent methyltransferase MAV_4442 from Mycobacterium avium (strain 104).